An 801-amino-acid chain; its full sequence is MKMTPLMEQYLKIKEQYKDSILLFRLGDFYEAFFEDAKTVSKVLNIVLTKRQDAPMAGIPYHALNTYLKKLVEAGYKVAICDQMEEPSKSKKLIRREVTRVVTPGAIVEDEFLSETNNYMVVLVREKEKYCAVFCDVSTGEVLIHESIDEQEVLDLMKAYSVSEIVCPEGLESEVREKLPGVYIEVIDEWYFSEPEEEVKRIYGIEDIHHFELSSLAMKSLSALIKYIKYTMISEKLNLKPPVTISRKNFMILDSATVENLSLIPGEKGKNLFDVLNHTETPMGARLLKKWILHPLTDRQQIEDRLNAVEKLKEDRLKLEQIRNLLSRVRDVERIVSRVEYNRAIPRDLVALRETLSVVPELNEELSNFDFFEKLNFPDSLFDLLCKAIEDDPAGSPGEGKVIKRGFSPELDEYRDLLEHSEEKLKEFEEREREKTGIQKLKVGYNQVFGYYIEVTKANLDKVPEDYERKQTLVNSERFTTPELKEFETKIMAAKERIEELEKELFRNVCEEVKKHKETLLEISEELARIDVLATLAYDAILYNYTRPTFSEDRMEIIGGRHPVVERFTRDFVENDLYMDDEKRFTVITGPNMSGKSTFIRQVGLISLMAQIGSFVPAKKAVLPVFDRIFTRMGARDDLAGGRSTFLVEMNEMALILLKATKKSLVLLDEVGRGTGTQDGISIAWAISEELISRGCKVLFATHFIELTNLENSFPQVQNKTILVKEEGSNVVFTHRVVDGVADRSYGADRSYGIEVARIAGIPENVIRRAFEIMEKGFKTKSQRKNGKVKKFSQQIPLFPA.

Position 590–597 (590–597 (GPNMSGKS)) interacts with ATP.

The protein belongs to the DNA mismatch repair MutS family.

In terms of biological role, this protein is involved in the repair of mismatches in DNA. It is possible that it carries out the mismatch recognition step. This protein has a weak ATPase activity. The polypeptide is DNA mismatch repair protein MutS (Thermotoga neapolitana (strain ATCC 49049 / DSM 4359 / NBRC 107923 / NS-E)).